The following is a 432-amino-acid chain: Gamma-glutamyl phosphate reductase (432 aa).

Belongs to the gamma-glutamyl phosphate reductase family.

The protein localises to the cytoplasm. The catalysed reaction is L-glutamate 5-semialdehyde + phosphate + NADP(+) = L-glutamyl 5-phosphate + NADPH + H(+). It functions in the pathway amino-acid biosynthesis; L-proline biosynthesis; L-glutamate 5-semialdehyde from L-glutamate: step 2/2. Functionally, catalyzes the NADPH-dependent reduction of L-glutamate 5-phosphate into L-glutamate 5-semialdehyde and phosphate. The product spontaneously undergoes cyclization to form 1-pyrroline-5-carboxylate. In Methylorubrum extorquens (strain PA1) (Methylobacterium extorquens), this protein is Gamma-glutamyl phosphate reductase.